The primary structure comprises 411 residues: Gamma-glutamyl phosphate reductase (411 aa).

Belongs to the gamma-glutamyl phosphate reductase family.

The protein resides in the cytoplasm. The catalysed reaction is L-glutamate 5-semialdehyde + phosphate + NADP(+) = L-glutamyl 5-phosphate + NADPH + H(+). It participates in amino-acid biosynthesis; L-proline biosynthesis; L-glutamate 5-semialdehyde from L-glutamate: step 2/2. Functionally, catalyzes the NADPH-dependent reduction of L-glutamate 5-phosphate into L-glutamate 5-semialdehyde and phosphate. The product spontaneously undergoes cyclization to form 1-pyrroline-5-carboxylate. This chain is Gamma-glutamyl phosphate reductase, found in Wolinella succinogenes (strain ATCC 29543 / DSM 1740 / CCUG 13145 / JCM 31913 / LMG 7466 / NCTC 11488 / FDC 602W) (Vibrio succinogenes).